Here is a 327-residue protein sequence, read N- to C-terminus: Pyruvate dehydrogenase E1 component subunit beta (327 aa).

Glu60 contacts thiamine diphosphate. Residues Val113, Ala161, Ile162, and Glu164 each coordinate K(+).

In terms of assembly, heterodimer of an alpha and a beta chain. Thiamine diphosphate is required as a cofactor.

It localises to the plastid. The protein resides in the chloroplast. It carries out the reaction N(6)-[(R)-lipoyl]-L-lysyl-[protein] + pyruvate + H(+) = N(6)-[(R)-S(8)-acetyldihydrolipoyl]-L-lysyl-[protein] + CO2. Functionally, the pyruvate dehydrogenase complex catalyzes the overall conversion of pyruvate to acetyl-CoA and CO(2). It contains multiple copies of three enzymatic components: pyruvate dehydrogenase (E1), dihydrolipoamide acetyltransferase (E2) and lipoamide dehydrogenase (E3). The polypeptide is Pyruvate dehydrogenase E1 component subunit beta (pdhB) (Cyanidium caldarium (Red alga)).